A 140-amino-acid chain; its full sequence is Large ribosomal subunit protein uL16 (140 aa).

The interval methionine 1–arginine 24 is disordered.

This sequence belongs to the universal ribosomal protein uL16 family. In terms of assembly, part of the 50S ribosomal subunit.

Its function is as follows. Binds 23S rRNA and is also seen to make contacts with the A and possibly P site tRNAs. The protein is Large ribosomal subunit protein uL16 of Opitutus terrae (strain DSM 11246 / JCM 15787 / PB90-1).